Consider the following 72-residue polypeptide: N-alpha-acetyltransferase 38, NatC auxiliary subunit (72 aa).

Residues 3-72 (NGEILLTSWL…KHIKSFSVRA (70 aa)) enclose the Sm domain.

Component of the N-terminal acetyltransferase C (NatC) complex, composed of the catalytic subunit Naa30, a large auxiliary subunit Naa35 and a small auxiliary subunit Naa38.

The protein resides in the endoplasmic reticulum. In terms of biological role, component of the NatC N-terminal acetyltransferase, which associates with the ribosome to acetylate nascent protein chains in a cotranslational manner. NatC acetylates protein N-termini starting with methionine, followed by a hydrophobic or amphipathic amino acid, with amino acids at positions 3 and 4 also contributing to NatC recognition. The first 4 amino acids of cognate substrates are recognized at the Naa30-Naa35 interface. NatC-dependent acetylation targets various substrate proteins to specific subcellular sites. The sequence is that of N-alpha-acetyltransferase 38, NatC auxiliary subunit (naa38) from Schizosaccharomyces pombe (strain 972 / ATCC 24843) (Fission yeast).